Consider the following 834-residue polypeptide: MTGIGARTAWRNAVGRRPRNARRVSRIAYRVSRVACRVSRIAYRVSRIAYRVSRVAWRNVAPAARRAHRPFPAVIHIASGIPLPTEPLPAPPVVVDRPASPDDAALIAPDDLARLLRGEHDDPFAVLGIHAESSARDVVVRCLLPGAARVELIDAASARTLATLSPVGSGELHAIRLPAPGPLRYRLRAHYADTVRDLDDPYACTPWLGSLDCHLLARGEHRDAYRRLGAHPCVHDGLEGTAFALWAPNASCVSVVGSFNGWDARVHAMRKRIECGVWELFVPGVGCGALYKFALRTRDGDRLLKADPYARRTEAPPRTASRICAPSAFGWRDDAWMRERAAAQSAHAPIAIYEVHLDSWRRHPDGRAYSYDELADALIPYVAALGFTHVELLPIAEYPFAGSWGYQPVSLFAPSARWGEPDALRRFVERCHLAGLGVLLDWVPAHFPQDAHGLARFDGTHLYEHEDRRVGLHRGWNTLVYNLGRHEVANFLIANALYWLREFHFDGLRVDAVASMLYLDYDRDDGQWLPNVHGGRENLEAVAFLRRLNETVHADAPQGAITIAEESTAWPMVSAPVAAGGLGFDFKWNMGWMNDTLSFMRVDPIHRRFHLDRLTFGLLYAWSEQFVLALSHDEVVHAKGSLLAKMPGDAWQRHANLRLYLAFQYAHPGKKLLFMGSEFGQEREWNHDRELDWARLADPASAGVRRLVGDLNRLYRRRGCLHRRDADSRGFRWIDCADSHQTVIAWRRIGDAPDDFVVVVCNFTPQPRTGYRIGVPAAGFYRELLNSDAADYGGSGLGNLGGVSSEPVPMHGEPHSLSLLLPPLAALVFAAPGH.

Residue D511 is the Nucleophile of the active site. The Proton donor role is filled by E565.

It belongs to the glycosyl hydrolase 13 family. GlgB subfamily. In terms of assembly, monomer.

It carries out the reaction Transfers a segment of a (1-&gt;4)-alpha-D-glucan chain to a primary hydroxy group in a similar glucan chain.. It functions in the pathway glycan biosynthesis; glycogen biosynthesis. In terms of biological role, catalyzes the formation of the alpha-1,6-glucosidic linkages in glycogen by scission of a 1,4-alpha-linked oligosaccharide from growing alpha-1,4-glucan chains and the subsequent attachment of the oligosaccharide to the alpha-1,6 position. The sequence is that of 1,4-alpha-glucan branching enzyme GlgB (glgB) from Burkholderia thailandensis (strain ATCC 700388 / DSM 13276 / CCUG 48851 / CIP 106301 / E264).